Reading from the N-terminus, the 162-residue chain is Transcriptional regulator MraZ (162 aa).

SpoVT-AbrB domains follow at residues 11 to 62 (EHPS…GLSV) and 98 to 141 (AVEC…SRDT).

Belongs to the MraZ family. Forms oligomers.

Its subcellular location is the cytoplasm. The protein localises to the nucleoid. The sequence is that of Transcriptional regulator MraZ from Pelobacter propionicus (strain DSM 2379 / NBRC 103807 / OttBd1).